A 411-amino-acid polypeptide reads, in one-letter code: D-ribitol-5-phosphate cytidylyltransferase (411 aa).

This sequence belongs to the IspD/TarI cytidylyltransferase family. IspD subfamily. Homodimer.

Its subcellular location is the cytoplasm. The protein resides in the cytosol. It carries out the reaction D-ribitol 5-phosphate + CTP + H(+) = CDP-L-ribitol + diphosphate. The catalysed reaction is D-ribose 5-phosphate + CTP + H(+) = CDP-D-ribose + diphosphate. It catalyses the reaction D-ribulose 5-phosphate + CTP + H(+) = CDP-D-ribulose + diphosphate. It functions in the pathway protein modification; protein glycosylation. Functionally, cytidylyltransferase required for protein O-linked mannosylation. Catalyzes the formation of CDP-ribitol nucleotide sugar from D-ribitol 5-phosphate. CDP-ribitol is a substrate of FKTN during the biosynthesis of the phosphorylated O-mannosyl trisaccharide (N-acetylgalactosamine-beta-3-N-acetylglucosamine-beta-4-(phosphate-6-)mannose), a carbohydrate structure present in alpha-dystroglycan (DAG1), which is required for binding laminin G-like domain-containing extracellular proteins with high affinity. Shows activity toward other pentose phosphate sugars and mediates formation of CDP-ribulose or CDP-ribose using CTP and ribulose-5-phosphate or ribose-5-phosphate, respectively. Not involved in dolichol production. This chain is D-ribitol-5-phosphate cytidylyltransferase (crppa), found in Xenopus tropicalis (Western clawed frog).